A 188-amino-acid chain; its full sequence is dCTP deaminase (188 aa).

DCTP is bound by residues 111–116, 135–137, glutamine 156, tyrosine 170, and glutamine 180; these read KSTYAR and TLE. Catalysis depends on glutamate 137, which acts as the Proton donor/acceptor.

The protein belongs to the dCTP deaminase family. As to quaternary structure, homotrimer.

It catalyses the reaction dCTP + H2O + H(+) = dUTP + NH4(+). Its pathway is pyrimidine metabolism; dUMP biosynthesis; dUMP from dCTP (dUTP route): step 1/2. Its function is as follows. Catalyzes the deamination of dCTP to dUTP. This is dCTP deaminase from Legionella pneumophila (strain Paris).